We begin with the raw amino-acid sequence, 2194 residues long: MSNSLSLTFTALNNPQINAISNPNARLRPLARVTRCSATCVERKRWLGTKLRSGGGLERIQLWESGGLGRLPKLRVAVKSSFSAVPDKPMGLYDPAFDKDSCGVGFVAELNGQSSRKTVTDALEMLVRMTHRGACGCEANTGDGAGILVALPHGFYQEVVDFQLPPQGNYAVGMFFLPKSDSRRKESKNIFTKVAESLGHKVLGWRSVPTDNTGLGKSAQLTEPVIEQVFLTPSSDSKVDLEKQMYILRKLSMVSITSALNLQSDGITDFYICSLSSRTVIYKGQLTPAQLGEYYYADLGNERFTSYMALIHSRFSTNTFPSWDRAQPFRVLGHNGEINTLRGNVNWIKAREGLLKCKELGLSENDLKKFLPIVDANSSDSGCFDGVLEFLLHSGKSLPEAVMMMIPEAWQNDKNMDPQRKAFYEYYSALMEPWDGPALISFTDGHYLGATLDRNGLRPGRFYVTHSGRVIMASEVGVVDIPPEDVCRKGRLNPGMMLLVDFEKQIVVNDDALKEQYSLARPYGDWLEKQKIELKDIIDSVHESDIVPPTISGVPPLSNDDVDMENMGIQGLLAPLKAFGYSVESLEILLLPMAKDGVEALGSMGNDTPLAVMSNREKLTFEYFKQMFAQVTNPPIDPIREKIVTSMRCMVGPEGDLTETTEEQCHRLSLKGPLLSTKEMEAIKKMNYRGWRSKVIDITYSKERGTKGLEEALDRICTEAHNAISEGYTTLVLSDRAFSKKHVAVSSLLAVGAVHQHLVKTLERTRVALMVESAEPREVHHFCTLVGFGADAICPYLAIEAIWRLQVDGKIPPKASGDFNSKDELVKKYFKASTYGMMKVLAKMGISTLASYKGAQIFEALGLSSEVIEKCFAGTPSRVEGATFEMLAQDALHLHELAFPSRIFSPGSAEAVALPNPGDYHWRKGGEVHLNDPLAIAKLQEAARTNSVDAYKQYSKTIHELNKACNLRGLLKFKDAASKVPISEVEPASEIVKRFCTGAMSYGSISLEAHTALATAMNTIGGKSNTGEGGEQPSRMEPLADGSRNPKRSAIKQVASGRFGVSSYYLTNADELQIKMAQGAKPGEGGELPGHKVIGDIAITRNSTAGVGLISPPPHHDIYSIEDLAQLIHDLKNANPAARISVKLVSEAGVGVIASGVVKGHAEHVLISGHDGGTGASRWTGIKSAGLPWELGLAETHQTLVANDLRGRTTLQTDGQLKTGRDVAIAALLGAEEYGFSTAPLITLGCIMMRKCHKNTCPVGIATQDPVLREKFAGEPEHVINFFFMVAEEMREIMSQLGFRTVNEMVGRSDMLEVDKEVVKGNAKLENIDLSLLLRPAAELRPEAAQYCVQKQDHGLDMALDNKLISLSNAALEKGLPVYIETPICNTNRAVGTMLSHEVTKRYNLAGLPADTIHIQFTGSAGQSFGAFLCPGITLELEGDSNDYIGKGLSGGKVVVYPPKGSNFDPKDNILIGNVALYGATRGEAYFNGMAAERFCVRNSGALAVVEGVGDHGCEYMTGGTVVVLGKTGRNFAAGMSGGIAYVLDVDGTFQSRCNLELVDLDKVEEEEDIITLRMLIQQHQRHTNSLLAKEVLVDFENLLPKFVKVFPREYKRVLASMKSDAASKDAVERAAEDVDEQDDEAQAVEKDAFEELKKLATASLNEKPSEAPKRPSQVTDAVKHRGFVAYEREGVQYRDPNVRLNDWNEVMMETKPGPLLKTQSARCMDCGTPFCHQENSGCPLGNKIPEFNELVYQNRWQEALERLLETNNFPEFTGRVCPAPCEGSCVLGIIENPVSIKNIECAIIDKAFEEGWMIPRPPVKRTGKRVAIVGSGPSGLAAADQLNKMGHIVTVFERADRIGGLMMYGVPNMKTDKVDIVQRRVNLMAEEGINFVVNANIGLDPLYSLERLREENDAIVLAVGATKPRDLPVPGRELSGVHFAMEFLHANTKSLLDSNLQDGNYISAKGKKVVVIGGGDTGTDCIGTSIRHGCTAVVNLELLPQPPPTRAPGNPWPQWPRIFRVDYGHQEAETKFGKDPRTYEVLTKRFVGDENGVVKGLEVVRVCWEKDETGKFQFKEIEGSEEIIEADLVLLAMGFLGPEATIAEKLGVERDNRSNFKADYGRFSTSVDGVFAAGDCRRGQSLVVWAISEGRQAAAQVDSYLTNEDHGIDGNQDEFVKRQQDLNKKHSKHTVMT.

Residues 1–101 constitute an amyloplast transit peptide; sequence MSNSLSLTFT…LYDPAFDKDS (101 aa). Cys102 acts as the Nucleophile in catalysis. Residues 102 to 503 enclose the Glutamine amidotransferase type-2 domain; that stretch reads CGVGFVAELN…PGMMLLVDFE (402 aa). A disordered region spans residues 1021 to 1045; sequence GGKSNTGEGGEQPSRMEPLADGSRN. FMN is bound at residue 1193 to 1250; the sequence is LAETHQTLVANDLRGRTTLQTDGQLKTGRDVAIAALLGAEEYGFSTAPLITLGCIMMR. Cys1246, Cys1252, and Cys1257 together coordinate [3Fe-4S] cluster. An NAD(+)-binding site is contributed by 1974 to 1988; that stretch reads GGGDTGTDCIGTSIR.

Belongs to the glutamate synthase family. Monomer. Requires [3Fe-4S] cluster as cofactor. FAD is required as a cofactor. It depends on FMN as a cofactor. Expressed in infected cells in root nodules. Barely detected in roots and stems.

It is found in the plastid. Its subcellular location is the amyloplast. It carries out the reaction 2 L-glutamate + NAD(+) = L-glutamine + 2-oxoglutarate + NADH + H(+). It participates in amino-acid biosynthesis; L-glutamate biosynthesis via GLT pathway; L-glutamate from 2-oxoglutarate and L-glutamine (NAD(+) route): step 1/1. It functions in the pathway energy metabolism; nitrogen metabolism. Its activity is regulated as follows. Inhibited by malate, citrate, glutamate, NAD(+) and azaserine, but not by 2-2' dipyridil and N-ethylmaleimide. In terms of biological role, required for the assimilation of symbiotically fixed nitrogen into amino acids in root nodules. This is Glutamate synthase [NADH], amyloplastic from Medicago sativa (Alfalfa).